The primary structure comprises 66 residues: Large ribosomal subunit protein bL33c (66 aa).

It belongs to the bacterial ribosomal protein bL33 family.

The protein resides in the plastid. The protein localises to the chloroplast. In Ceratophyllum demersum (Rigid hornwort), this protein is Large ribosomal subunit protein bL33c.